The primary structure comprises 352 residues: Tubby-like F-box protein 10 (352 aa).

Over residues 1–11 (MAAVREPREEA) the composition is skewed to basic and acidic residues. A disordered region spans residues 1–23 (MAAVREPREEAAVGEGEGEEEGR). The F-box domain occupies 22 to 78 (GRWGGLLPELVEEVVRRVEASGGERWPARKDLVSCACVCRRWREAAAAVVRPLPESG).

Belongs to the TUB family. As to expression, ubiquitous.

The sequence is that of Tubby-like F-box protein 10 (TULP10) from Oryza sativa subsp. japonica (Rice).